Consider the following 1156-residue polypeptide: Mastermind-like protein 2 (1156 aa).

The segment at 81–165 (QHGQGARKAG…PPASTPGDQR (85 aa)) is disordered. Residues 113-122 (PAASQAAATA) show a composition bias toward low complexity. Over residues 153–165 (EQQPPASTPGDQR) the composition is skewed to polar residues. At S175 the chain carries Phosphoserine. 7 disordered regions span residues 340–359 (FNID…SLPM), 369–506 (SPGL…GSGQ), 531–630 (QQKP…QQQQ), 658–680 (QQQQ…QPLL), 705–743 (YQVS…GYMN), 784–820 (IAPQ…YSGG), and 1059–1100 (LPNL…FQGT). 4 stretches are compositionally biased toward polar residues: residues 344-354 (LGQQSQRSTPR), 371-380 (GLTQGPSGSP), 393-419 (MANS…TGSG), and 428-437 (QEVSHAQQLK). The span at 440–470 (AANRQQHARMQQHQQQHQPTNWSALPSSAGP) shows a compositional bias: low complexity. Composition is skewed to polar residues over residues 484 to 496 (SFGQ…QSSP), 532 to 543 (QKPQDLSRSFIN), and 563 to 587 (NSDQ…LHYT). A compositionally biased stretch (low complexity) spans 588 to 630 (QQQQQQQQQQQQQQQQQQQQQQQQQQQQQQQQQQSSISAQQQQ). 2 stretches are compositionally biased toward low complexity: residues 706–725 (QVSQ…NTGP) and 733–743 (SNPNTGSGYMN). A compositionally biased stretch (polar residues) spans 807-820 (NVGNMQPTAQYSGG).

This sequence belongs to the mastermind family. In terms of assembly, interacts through its N-terminal region with the ankyrin repeat region of the Notch proteins NOTCH1, NOTCH2, NOTCH3 and NOTCH4. Forms a DNA-binding complex with Notch proteins and RBPSUH/RBP-J kappa. In terms of tissue distribution, widely expressed with high levels detected in placenta, salivary gland and skeletal muscle.

The protein localises to the nucleus speckle. Its function is as follows. Acts as a transcriptional coactivator for NOTCH proteins. Has been shown to amplify NOTCH-induced transcription of HES1. Potentiates activation by NOTCH3 and NOTCH4 more efficiently than MAML1 or MAML3. This is Mastermind-like protein 2 (MAML2) from Homo sapiens (Human).